Reading from the N-terminus, the 129-residue chain is Small ribosomal subunit protein uS11 (129 aa).

This sequence belongs to the universal ribosomal protein uS11 family. As to quaternary structure, part of the 30S ribosomal subunit. Interacts with proteins S7 and S18. Binds to IF-3.

Located on the platform of the 30S subunit, it bridges several disparate RNA helices of the 16S rRNA. Forms part of the Shine-Dalgarno cleft in the 70S ribosome. The chain is Small ribosomal subunit protein uS11 from Azotobacter vinelandii (strain DJ / ATCC BAA-1303).